The sequence spans 293 residues: ATP synthase gamma chain (293 aa).

Belongs to the ATPase gamma chain family. F-type ATPases have 2 components, CF(1) - the catalytic core - and CF(0) - the membrane proton channel. CF(1) has five subunits: alpha(3), beta(3), gamma(1), delta(1), epsilon(1). CF(0) has three main subunits: a, b and c.

It is found in the cell inner membrane. In terms of biological role, produces ATP from ADP in the presence of a proton gradient across the membrane. The gamma chain is believed to be important in regulating ATPase activity and the flow of protons through the CF(0) complex. This Sinorhizobium fredii (strain NBRC 101917 / NGR234) protein is ATP synthase gamma chain.